Reading from the N-terminus, the 302-residue chain is Short-chain dehydrogenase/reductase 3 (302 aa).

4 helical membrane-spanning segments follow: residues 9–29, 170–190, 195–215, and 253–273; these read LVMF…GLVL, IVCL…DYCT, AFAF…VSAT, and AVQL…LVIL. Ser-175 is a binding site for substrate. Tyr-188 acts as the Proton acceptor in catalysis.

This sequence belongs to the short-chain dehydrogenases/reductases (SDR) family. Widely expressed with highest levels found in heart, placenta, lung, liver, kidney, pancreas, thyroid, testis, stomach, trachea and spinal cord. Lower levels found in skeletal muscle, intestine and lymph node. No expression detected in brain. In the retina, expressed in cone but not rod outer segments.

It localises to the membrane. The enzyme catalyses all-trans-retinol + NADP(+) = all-trans-retinal + NADPH + H(+). In terms of biological role, catalyzes the reduction of all-trans-retinal to all-trans-retinol in the presence of NADPH. This is Short-chain dehydrogenase/reductase 3 (DHRS3) from Homo sapiens (Human).